The following is a 158-amino-acid chain: Large ribosomal subunit protein uL15 (158 aa).

The protein belongs to the universal ribosomal protein uL15 family. As to quaternary structure, part of the 50S ribosomal subunit.

In terms of biological role, binds to the 23S rRNA. The protein is Large ribosomal subunit protein uL15 of Aeropyrum pernix (strain ATCC 700893 / DSM 11879 / JCM 9820 / NBRC 100138 / K1).